We begin with the raw amino-acid sequence, 400 residues long: Eukaryotic translation initiation factor 3 subunit M (400 aa).

Residues 180–354 (LIAKIYSALV…QSFAVHRAQK (175 aa)) form the PCI domain.

This sequence belongs to the eIF-3 subunit M family. As to quaternary structure, component of the eukaryotic translation initiation factor 3 (eIF-3) complex.

The protein localises to the cytoplasm. Its function is as follows. Component of the eukaryotic translation initiation factor 3 (eIF-3) complex, which is involved in protein synthesis of a specialized repertoire of mRNAs and, together with other initiation factors, stimulates binding of mRNA and methionyl-tRNAi to the 40S ribosome. The eIF-3 complex specifically targets and initiates translation of a subset of mRNAs involved in cell proliferation. This chain is Eukaryotic translation initiation factor 3 subunit M, found in Yarrowia lipolytica (strain CLIB 122 / E 150) (Yeast).